The chain runs to 458 residues: Transmembrane protein 135 (458 aa).

The next 6 helical transmembrane spans lie at 68-88, 96-116, 149-169, 298-318, 331-351, and 377-397; these read ILQS…FFCI, FYSW…AILI, TLRN…MFFF, FQLG…SCFL, IVAG…TISM, and ADTI…VMEV.

This sequence belongs to the TMEM135 family.

It is found in the mitochondrion membrane. The protein localises to the peroxisome membrane. In terms of biological role, involved in mitochondrial metabolism by regulating the balance between mitochondrial fusion and fission. May act as a regulator of mitochondrial fission that promotes DNM1L-dependent fission through activation of DNM1L. May be involved in peroxisome organization. The chain is Transmembrane protein 135 from Mus musculus (Mouse).